A 479-amino-acid chain; its full sequence is Sulfate adenylyltransferase subunit 1 (479 aa).

The tr-type G domain occupies 25 to 239; sequence KSLLRFLTCG…EVLETVDIQR (215 aa). The interval 34–41 is G1; that stretch reads GSVDDGKS. 34–41 is a GTP binding site; the sequence is GSVDDGKS. The tract at residues 92–96 is G2; the sequence is GITID. The tract at residues 113-116 is G3; sequence DTPG. GTP-binding positions include 113-117 and 168-171; these read DTPGH and NKMD. The interval 168-171 is G4; it reads NKMD. A G5 region spans residues 206–208; the sequence is SAL.

This sequence belongs to the TRAFAC class translation factor GTPase superfamily. Classic translation factor GTPase family. CysN/NodQ subfamily. As to quaternary structure, heterodimer composed of CysD, the smaller subunit, and CysN.

The enzyme catalyses sulfate + ATP + H(+) = adenosine 5'-phosphosulfate + diphosphate. The protein operates within sulfur metabolism; hydrogen sulfide biosynthesis; sulfite from sulfate: step 1/3. In terms of biological role, with CysD forms the ATP sulfurylase (ATPS) that catalyzes the adenylation of sulfate producing adenosine 5'-phosphosulfate (APS) and diphosphate, the first enzymatic step in sulfur assimilation pathway. APS synthesis involves the formation of a high-energy phosphoric-sulfuric acid anhydride bond driven by GTP hydrolysis by CysN coupled to ATP hydrolysis by CysD. The polypeptide is Sulfate adenylyltransferase subunit 1 (Salmonella agona (strain SL483)).